Here is a 61-residue protein sequence, read N- to C-terminus: UPF0434 protein PFLU_3771 (61 aa).

This sequence belongs to the UPF0434 family.

This chain is UPF0434 protein PFLU_3771, found in Pseudomonas fluorescens (strain SBW25).